Consider the following 403-residue polypeptide: Tubby-like F-box protein 6 (403 aa).

The 56-residue stretch at Ser50 to Gly105 folds into the F-box domain.

It belongs to the TUB family. As to expression, ubiquitous.

This chain is Tubby-like F-box protein 6 (TULP6), found in Oryza sativa subsp. japonica (Rice).